Consider the following 316-residue polypeptide: Acetyl-coenzyme A carboxylase carboxyl transferase subunit alpha (316 aa).

Residues 40 to 293 form the CoA carboxyltransferase C-terminal domain; sequence LEKRSRDALR…GDLIAKTMKE (254 aa).

It belongs to the AccA family. In terms of assembly, acetyl-CoA carboxylase is a heterohexamer composed of biotin carboxyl carrier protein (AccB), biotin carboxylase (AccC) and two subunits each of ACCase subunit alpha (AccA) and ACCase subunit beta (AccD).

It localises to the cytoplasm. It carries out the reaction N(6)-carboxybiotinyl-L-lysyl-[protein] + acetyl-CoA = N(6)-biotinyl-L-lysyl-[protein] + malonyl-CoA. The protein operates within lipid metabolism; malonyl-CoA biosynthesis; malonyl-CoA from acetyl-CoA: step 1/1. In terms of biological role, component of the acetyl coenzyme A carboxylase (ACC) complex. First, biotin carboxylase catalyzes the carboxylation of biotin on its carrier protein (BCCP) and then the CO(2) group is transferred by the carboxyltransferase to acetyl-CoA to form malonyl-CoA. This is Acetyl-coenzyme A carboxylase carboxyl transferase subunit alpha from Mesorhizobium japonicum (strain LMG 29417 / CECT 9101 / MAFF 303099) (Mesorhizobium loti (strain MAFF 303099)).